The chain runs to 236 residues: Purine nucleoside phosphorylase DeoD-type (236 aa).

Residue histidine 5 participates in a purine D-ribonucleoside binding. Residues glycine 21, arginine 25, arginine 44, and 88–91 (RVGS) contribute to the phosphate site. A purine D-ribonucleoside-binding positions include 180 to 182 (EME) and 204 to 205 (SD). Aspartate 205 functions as the Proton donor in the catalytic mechanism.

It belongs to the PNP/UDP phosphorylase family. As to quaternary structure, homohexamer; trimer of homodimers.

The catalysed reaction is a purine D-ribonucleoside + phosphate = a purine nucleobase + alpha-D-ribose 1-phosphate. It carries out the reaction a purine 2'-deoxy-D-ribonucleoside + phosphate = a purine nucleobase + 2-deoxy-alpha-D-ribose 1-phosphate. Catalyzes the reversible phosphorolytic breakdown of the N-glycosidic bond in the beta-(deoxy)ribonucleoside molecules, with the formation of the corresponding free purine bases and pentose-1-phosphate. The sequence is that of Purine nucleoside phosphorylase DeoD-type from Psychromonas ingrahamii (strain DSM 17664 / CCUG 51855 / 37).